The following is a 171-amino-acid chain: ATP synthase subunit b (171 aa).

The chain crosses the membrane as a helical span at residues 24 to 44; it reads INLVIVIGVLYWFLKGFLGGI.

The protein belongs to the ATPase B chain family. As to quaternary structure, F-type ATPases have 2 components, F(1) - the catalytic core - and F(0) - the membrane proton channel. F(1) has five subunits: alpha(3), beta(3), gamma(1), delta(1), epsilon(1). F(0) has four main subunits: a(1), b(1), b'(1) and c(10-14). The alpha and beta chains form an alternating ring which encloses part of the gamma chain. F(1) is attached to F(0) by a central stalk formed by the gamma and epsilon chains, while a peripheral stalk is formed by the delta, b and b' chains.

It is found in the cellular thylakoid membrane. Its function is as follows. F(1)F(0) ATP synthase produces ATP from ADP in the presence of a proton or sodium gradient. F-type ATPases consist of two structural domains, F(1) containing the extramembraneous catalytic core and F(0) containing the membrane proton channel, linked together by a central stalk and a peripheral stalk. During catalysis, ATP synthesis in the catalytic domain of F(1) is coupled via a rotary mechanism of the central stalk subunits to proton translocation. Functionally, component of the F(0) channel, it forms part of the peripheral stalk, linking F(1) to F(0). This chain is ATP synthase subunit b, found in Synechococcus sp. (strain WH7803).